A 436-amino-acid chain; its full sequence is Adenylosuccinate synthetase (436 aa).

GTP contacts are provided by residues Gly21–Lys27 and Gly49–Thr51. The active-site Proton acceptor is Asp22. Residues Asp22 and Gly49 each coordinate Mg(2+). IMP contacts are provided by residues Asp22 to Lys25, Asn47 to His50, Thr135, Arg149, Gln230, Thr245, and Arg309. His50 functions as the Proton donor in the catalytic mechanism. Thr305–Arg311 provides a ligand contact to substrate. Residues Arg311, Lys337–Asp339, and Ser423–Gly425 each bind GTP.

The protein belongs to the adenylosuccinate synthetase family. Homodimer. It depends on Mg(2+) as a cofactor.

The protein resides in the cytoplasm. It catalyses the reaction IMP + L-aspartate + GTP = N(6)-(1,2-dicarboxyethyl)-AMP + GDP + phosphate + 2 H(+). It functions in the pathway purine metabolism; AMP biosynthesis via de novo pathway; AMP from IMP: step 1/2. In terms of biological role, plays an important role in the de novo pathway of purine nucleotide biosynthesis. Catalyzes the first committed step in the biosynthesis of AMP from IMP. This is Adenylosuccinate synthetase from Thermoplasma volcanium (strain ATCC 51530 / DSM 4299 / JCM 9571 / NBRC 15438 / GSS1).